The chain runs to 146 residues: Snaclec coagulation factor IX/factor X-binding protein subunit B (146 aa).

The first 23 residues, 1–23 (MGRFIFMSFGFLVVFLSLSGTAA), serve as a signal peptide directing secretion. Residues 24–146 (DCPSDWSSYE…MAQFVCEFQA (123 aa)) form the C-type lectin domain. 3 disulfides stabilise this stretch: Cys-25–Cys-36, Cys-53–Cys-142, and Cys-119–Cys-134. Residues Ser-64, Gln-66, and Glu-70 each contribute to the Ca(2+) site. Glu-143 lines the Ca(2+) pocket.

This sequence belongs to the snaclec family. As to quaternary structure, heterodimer with subunit A of IX/X-bp or IX-bp; disulfide-linked. In terms of tissue distribution, expressed by the venom gland.

It is found in the secreted. In terms of biological role, when linked to subunit A of IX/X-bp, anticoagulant protein which binds to the gamma-carboxyglutamic acid-domain regions of factors IX (F9) and factor X (10) in the presence of calcium with a 1 to 1 stoichiometry. Its function is as follows. When linked to subunit A of IX-bp, anticoagulant protein which binds to the gamma-carboxyglutamic acid-domain regions of factor IX (but not to factor X) in the presence of calcium with a 1 to 1 stoichiometry. This chain is Snaclec coagulation factor IX/factor X-binding protein subunit B, found in Protobothrops flavoviridis (Habu).